The primary structure comprises 134 residues: Ribosome-binding factor A (134 aa).

It belongs to the RbfA family. As to quaternary structure, monomer. Binds 30S ribosomal subunits, but not 50S ribosomal subunits or 70S ribosomes.

Its subcellular location is the cytoplasm. Its function is as follows. One of several proteins that assist in the late maturation steps of the functional core of the 30S ribosomal subunit. Associates with free 30S ribosomal subunits (but not with 30S subunits that are part of 70S ribosomes or polysomes). Required for efficient processing of 16S rRNA. May interact with the 5'-terminal helix region of 16S rRNA. The sequence is that of Ribosome-binding factor A from Parasynechococcus marenigrum (strain WH8102).